Reading from the N-terminus, the 489-residue chain is Inositol-pentakisphosphate 2-kinase (489 aa).

An EXKPK motif motif is present at residues 136–140 (EIKPK).

Belongs to the IPK1 type 2 family. In brain, it is expressed throughout the hippocampus (CA1, CA2, CA3 and dentate gyrus), inner layers of the cerebral cortex, and Purkinje cells of the cerebellum. In heart, it is expressed in cardiomyocytes but not in interstitial cells, blood vessels, or valves. Also expressed in testis.

It localises to the cytoplasm. The protein localises to the nucleus. It carries out the reaction 1D-myo-inositol 1,3,4,5,6-pentakisphosphate + ATP = 1D-myo-inositol hexakisphosphate + ADP + H(+). Its function is as follows. Phosphorylates Ins(1,3,4,5,6)P5 at position 2 to form Ins(1,2,3,4,5,6)P6 (InsP6 or phytate). InsP6 is involved in many processes such as mRNA export, non-homologous end-joining, endocytosis, ion channel regulation. It also protects cells from TNF-alpha-induced apoptosis. In Mus musculus (Mouse), this protein is Inositol-pentakisphosphate 2-kinase (Ippk).